We begin with the raw amino-acid sequence, 362 residues long: Chorismate synthase (362 aa).

Arg-46 contacts NADP(+). FMN is bound by residues 122-124 (RSS), 238-239 (NA), Gly-278, 293-297 (KPTPS), and Arg-319.

This sequence belongs to the chorismate synthase family. Homotetramer. Requires FMNH2 as cofactor.

The enzyme catalyses 5-O-(1-carboxyvinyl)-3-phosphoshikimate = chorismate + phosphate. It functions in the pathway metabolic intermediate biosynthesis; chorismate biosynthesis; chorismate from D-erythrose 4-phosphate and phosphoenolpyruvate: step 7/7. Functionally, catalyzes the anti-1,4-elimination of the C-3 phosphate and the C-6 proR hydrogen from 5-enolpyruvylshikimate-3-phosphate (EPSP) to yield chorismate, which is the branch point compound that serves as the starting substrate for the three terminal pathways of aromatic amino acid biosynthesis. This reaction introduces a second double bond into the aromatic ring system. The polypeptide is Chorismate synthase (Campylobacter jejuni subsp. jejuni serotype O:23/36 (strain 81-176)).